A 373-amino-acid polypeptide reads, in one-letter code: 3-isopropylmalate dehydrogenase gloI (373 aa).

Positions 92, 98, and 108 each coordinate substrate. Mg(2+) is bound by residues Asp-228, Asp-253, and Asp-257. Residues 294 to 300 (HGSAPDI) and Asn-307 each bind NADP(+).

This sequence belongs to the isocitrate and isopropylmalate dehydrogenases family. In terms of assembly, homodimer. Mg(2+) is required as a cofactor. Requires Mn(2+) as cofactor.

The enzyme catalyses (2R,3S)-3-isopropylmalate + NAD(+) = 4-methyl-2-oxopentanoate + CO2 + NADH. Its pathway is mycotoxin biosynthesis. 3-isopropylmalate dehydrogenase; part of the gene cluster that mediates the biosynthesis of pneumocandins, lipohexapeptides of the echinocandin family that prevent fungal cell wall formation by non-competitive inhibition of beta-1,3-glucan synthase. The 10,12-dimethylmyristoyl side chain is synthesized by the reducing polyketide synthase gloL/GLPKS4. The thioesterase gloN/GLHYD exclusively interacts with gloL/GLPKS4 to maintain turnover of the polyketide side chain. The 10R,12S-dimethylmyristic acid is then transferred to the first thiolation domain of the nonribosomal peptide synthetase gloA/GLNRPS4 by the acyl-AMP ligase gloD/GLligase, followed by its acylation to L-ornithine to trigger elongation of the cyclic hexapeptide. L-ornithine, 4R-hydroxyl-L-proline (generated from L-proline by the dioxygenase gloF/GLOXY2), 3S-hydroxyl-L-homotyrosine (generated by gloG/GLHtyB, gloH/GLHtyA, gloI/GLHtyC, gloJ/GLHtyD and hydroxylated at C-3 by the dioxygenase gloM/GLOXY1), 3R-hydroxyl-L-glutamine (generated from L-glutamine probably by the dioxygenase gloE/GLOXY3) and 3S-hydroxyl-L-proline (generated from L-proline by the dioxygenase gloF/GLOXY2 to yield pneumocandin B0), or 3S-hydroxyl-4S-methyl-L-proline (generated from L-leucine by the dioxygenase gloC/GLOXY4 to yield pneumocandin A0) are sequentially added to the growing chain. The last C domain of gloA/GLNRPS4 is proposed to be responsible for cyclization by condensation to form the peptide bond between L-ornithine and 3S-hydroxyl-4S-methyl-L-proline (for pneumocandin A0) or 3S-hydroxyl-L-proline (for pneumocandin B0). Finally, the subsequent C-4 hydroxylation of 3S-hydroxyl-L-homotyrosine and L-ornithine dihydroxylation at C-4 and C-5 are performed by the cytochrome P450 monooxygenases gloP/GLP450-1 and gloO/GLP450-2, respectively. In Glarea lozoyensis (strain ATCC 20868 / MF5171), this protein is 3-isopropylmalate dehydrogenase gloI.